The chain runs to 342 residues: Alternative oxidase, mitochondrial (342 aa).

The N-terminal 20 residues, 1-20 (MIKTYQYRSILNSRNVGIRF), are a transit peptide targeting the mitochondrion. A helical transmembrane segment spans residues 135–155 (LTRCIFLESVAGVPGMVAAFI). Fe cation-binding residues include glutamate 142, glutamate 181, and histidine 184. A helical transmembrane segment spans residues 200–220 (FIIYMGQGVFANLFFLVYLIK). Fe cation contacts are provided by glutamate 232, glutamate 287, and histidine 290. Basic and acidic residues-rich tracts occupy residues 308-321 (PFALKVEDVPKEQQ) and 330-342 (PHPEGWNREQMRL). Residues 308–342 (PFALKVEDVPKEQQPDEYSLKTPHPEGWNREQMRL) are disordered.

The protein belongs to the alternative oxidase family. As to quaternary structure, homodimer; disulfide-linked. Fe cation serves as cofactor.

The protein localises to the mitochondrion inner membrane. Its function is as follows. Catalyzes cyanide-resistant oxygen consumption. May increase respiration when the cytochrome respiratory pathway is restricted, or in response to low temperatures. The protein is Alternative oxidase, mitochondrial (AOX1) of Wickerhamomyces anomalus (Yeast).